Consider the following 256-residue polypeptide: Surfeit locus protein 2 (256 aa).

Residues 133 to 256 (RRREDQMDGD…KSFSSCKQPG (124 aa)) are disordered. Residues 135–150 (REDQMDGDGPRPREAF) are compositionally biased toward basic and acidic residues. Low complexity predominate over residues 156-165 (SDEGGAASDD). Over residues 183–193 (STEDGDGTDDF) the composition is skewed to acidic residues. Phosphothreonine occurs at positions 190 and 195. Over residues 194–218 (LTDKEDEKAKPPREKATDEGRRETT) the composition is skewed to basic and acidic residues. Basic residues predominate over residues 224–247 (VQKRGKKQLGSLKKKFKSHHRKPK).

Belongs to the SURF2 family.

This Homo sapiens (Human) protein is Surfeit locus protein 2 (SURF2).